The primary structure comprises 333 residues: NADH-quinone oxidoreductase subunit H (333 aa).

8 helical membrane-spanning segments follow: residues 15–35, 88–108, 117–137, 159–179, 191–211, 241–261, 273–293, and 313–333; these read FFIF…FVTY, FILA…VIPF, IGVG…GVLT, ISYE…TGSL, VWYI…AVAE, FFML…TVLF, FIPG…LFIW, and VLLP…ELFF.

The protein belongs to the complex I subunit 1 family. In terms of assembly, NDH-1 is composed of 14 different subunits. Subunits NuoA, H, J, K, L, M, N constitute the membrane sector of the complex.

It localises to the cell membrane. It carries out the reaction a quinone + NADH + 5 H(+)(in) = a quinol + NAD(+) + 4 H(+)(out). In terms of biological role, NDH-1 shuttles electrons from NADH, via FMN and iron-sulfur (Fe-S) centers, to quinones in the respiratory chain. The immediate electron acceptor for the enzyme in this species is believed to be ubiquinone. Couples the redox reaction to proton translocation (for every two electrons transferred, four hydrogen ions are translocated across the cytoplasmic membrane), and thus conserves the redox energy in a proton gradient. This subunit may bind ubiquinone. The polypeptide is NADH-quinone oxidoreductase subunit H (Bacillus cytotoxicus (strain DSM 22905 / CIP 110041 / 391-98 / NVH 391-98)).